The following is a 616-amino-acid chain: Elongation factor 4 (616 aa).

The 182-residue stretch at 14–195 folds into the tr-type G domain; it reads SRIRNFCIIA…EVIRQVPPPV (182 aa). GTP-binding positions include 26-31 and 142-145; these read DHGKST and NKID.

This sequence belongs to the TRAFAC class translation factor GTPase superfamily. Classic translation factor GTPase family. LepA subfamily.

Its subcellular location is the cell membrane. The enzyme catalyses GTP + H2O = GDP + phosphate + H(+). In terms of biological role, required for accurate and efficient protein synthesis under certain stress conditions. May act as a fidelity factor of the translation reaction, by catalyzing a one-codon backward translocation of tRNAs on improperly translocated ribosomes. Back-translocation proceeds from a post-translocation (POST) complex to a pre-translocation (PRE) complex, thus giving elongation factor G a second chance to translocate the tRNAs correctly. Binds to ribosomes in a GTP-dependent manner. This chain is Elongation factor 4, found in Nocardia farcinica (strain IFM 10152).